Reading from the N-terminus, the 377-residue chain is MTQIQQAGADSQALRTPADYQAQLDEKRERLTQLFAGFNPPALEVHASPAEHYRMRAEFRIWHEGDDLFHCMYAQATKEIIRVDHFPTASLLINQLMPVLLAGLRPHFVLRRKLFQIDYLSTQSGQIIVSLLYHRKLEAEWQQAAETLQADLQAQGFDLRLIGRAHKQKICLGDDFVIEQLNVAGRQLTYKQVENSFTQPNAAINEQMLGWALDVTRGSEGDLLELYCGNGNFSIALAQNFRKVLATEIAKPSVDSAQFNIAANGVDNLIILRMSAEEFTMAMRGEREFNRLKGVDLKSYQCNTIFVDPPRAGLDDATVKLVQEYDNILYISCNPETLQANMAVLGETHEVARFALFDQFPWTHHMEAGVYLKRKAG.

Q199, Y227, N232, E248, and D308 together coordinate S-adenosyl-L-methionine. C333 serves as the catalytic Nucleophile. Catalysis depends on E367, which acts as the Proton acceptor.

Belongs to the class I-like SAM-binding methyltransferase superfamily. RNA M5U methyltransferase family. TrmA subfamily.

The enzyme catalyses uridine(54) in tRNA + S-adenosyl-L-methionine = 5-methyluridine(54) in tRNA + S-adenosyl-L-homocysteine + H(+). The catalysed reaction is uridine(341) in tmRNA + S-adenosyl-L-methionine = 5-methyluridine(341) in tmRNA + S-adenosyl-L-homocysteine + H(+). Dual-specificity methyltransferase that catalyzes the formation of 5-methyluridine at position 54 (m5U54) in all tRNAs, and that of position 341 (m5U341) in tmRNA (transfer-mRNA). In Aeromonas salmonicida (strain A449), this protein is tRNA/tmRNA (uracil-C(5))-methyltransferase.